The chain runs to 200 residues: Small ribosomal subunit protein eS1 (200 aa).

It belongs to the eukaryotic ribosomal protein eS1 family.

This chain is Small ribosomal subunit protein eS1, found in Thermococcus gammatolerans (strain DSM 15229 / JCM 11827 / EJ3).